Consider the following 270-residue polypeptide: Putative hydro-lyase ACIAD2519 (270 aa).

The protein belongs to the D-glutamate cyclase family.

In Acinetobacter baylyi (strain ATCC 33305 / BD413 / ADP1), this protein is Putative hydro-lyase ACIAD2519.